A 324-amino-acid chain; its full sequence is Olfactory receptor 5A2 (324 aa).

The Extracellular segment spans residues 1–26 (MAVGRNNTIVTKFILLGLSDHPQMKI). Residue asparagine 6 is glycosylated (N-linked (GlcNAc...) asparagine). Residues 27 to 47 (FLFMLFLGLYLLTLAWNLSLI) traverse the membrane as a helical segment. Residues 48-55 (ALIKMDSH) are Cytoplasmic-facing. Residues 56 to 76 (LHMPMYFFLSNLSFLDICYVS) form a helical membrane-spanning segment. Residues 77-100 (STAPKMLSDIITEQKTISFVGCAT) are Extracellular-facing. A disulfide bridge connects residues cysteine 98 and cysteine 190. Residues 101–121 (QYFVFCGMGLTECFLLAAMAY) traverse the membrane as a helical segment. The Cytoplasmic portion of the chain corresponds to 122-134 (DRYAAICNPLLYT). Residues 135–155 (VLISHTLCLKMVVGAYVGGFL) traverse the membrane as a helical segment. At 156 to 197 (SSFIETYSVYQHDFCGPYMINHFFCDLPPVLALSCSDTFTSE) the chain is on the extracellular side. The helical transmembrane segment at 198 to 218 (VVTFIVSVVVGIVSVLVVLIS) threads the bilayer. Topologically, residues 219 to 238 (YGYIVAAVVKISSATGRTKA) are cytoplasmic. A helical membrane pass occupies residues 239 to 259 (FSTCASHLTAVTLFYGSGFFM). Residues 260–272 (YMRPSSSYSLNRD) are Extracellular-facing. Residues 273-293 (KVVSIFYALVIPVVNPIIYSF) traverse the membrane as a helical segment. The Cytoplasmic segment spans residues 294 to 324 (RNKEIKNAMRKAMERDPGISHGGPFIFMTLG).

Belongs to the G-protein coupled receptor 1 family.

The protein resides in the cell membrane. Odorant receptor. The chain is Olfactory receptor 5A2 (OR5A2) from Homo sapiens (Human).